A 287-amino-acid chain; its full sequence is Bifunctional protein FolD (287 aa).

Residues G165 to G167, T192, and V233 contribute to the NADP(+) site.

Belongs to the tetrahydrofolate dehydrogenase/cyclohydrolase family. In terms of assembly, homodimer.

The enzyme catalyses (6R)-5,10-methylene-5,6,7,8-tetrahydrofolate + NADP(+) = (6R)-5,10-methenyltetrahydrofolate + NADPH. The catalysed reaction is (6R)-5,10-methenyltetrahydrofolate + H2O = (6R)-10-formyltetrahydrofolate + H(+). It participates in one-carbon metabolism; tetrahydrofolate interconversion. Functionally, catalyzes the oxidation of 5,10-methylenetetrahydrofolate to 5,10-methenyltetrahydrofolate and then the hydrolysis of 5,10-methenyltetrahydrofolate to 10-formyltetrahydrofolate. This chain is Bifunctional protein FolD, found in Cutibacterium acnes (strain DSM 16379 / KPA171202) (Propionibacterium acnes).